Here is a 402-residue protein sequence, read N- to C-terminus: MDSASIDAIHMNGIKSKYLYDILKGIVREKNYDVLETINVSEFLAELLDHMVNTIPNELFQTKVNNGRHTVGRKEDSEENEEAVYGTDIDDANDVHTRQLDDLKRISTHLTTNFKDKSQLPFTIVRICELCFDPFHYFKTYELDKFVNALQKCCLVRGAWRRYELKDVRELSNSQSDKEHIDCDQNDVALSKIPWLDEKMVSELTPFIKEIDTIMSVNLSFEDDEMDDDDDDNLKNQNNDRIITHQDDNIIVEEYYENEDQDDENTGFSNQVINDNNDSQEDDDEDSDYIEEDEGDEDEDDDDDEEEEEEEDGDEDEDEDKHFDIKVEEEAVKEDANTTRNELMNVSNNSDDSSLQNDTGIAISSQNDTRDLSKRRLPLSDENDGNYANPASFSKRNKASES.

The interval 258–402 (NEDQDDENTG…FSKRNKASES (145 aa)) is disordered. Over residues 266 to 277 (TGFSNQVINDNN) the composition is skewed to polar residues. Residues 278-319 (DSQEDDDEDSDYIEEDEGDEDEDDDDDEEEEEEEDGDEDEDE) are compositionally biased toward acidic residues. Residues 320–337 (DKHFDIKVEEEAVKEDAN) show a composition bias toward basic and acidic residues. Over residues 345–358 (NVSNNSDDSSLQND) the composition is skewed to low complexity.

It belongs to the PPP4R2 family. Regulatory subunit (R2) of the histone H2A phosphatase complex (HTP-C) consisting of PPH3, PSY2 and PSY4.

Its subcellular location is the nucleus. Its function is as follows. Regulatory subunit of the histone H2A phosphatase complex, which dephosphorylates H2AS128ph (gamma-H2A) that has been displaced from sites of DNA lesions in the double-stranded DNA break repair process. Dephosphorylation is necessary for efficient recovery from the DNA damage checkpoint. The polypeptide is Serine/threonine-protein phosphatase 4 regulatory subunit 2 (PSY4) (Candida glabrata (strain ATCC 2001 / BCRC 20586 / JCM 3761 / NBRC 0622 / NRRL Y-65 / CBS 138) (Yeast)).